The following is a 408-amino-acid chain: Histidine--tRNA ligase (408 aa).

The protein belongs to the class-II aminoacyl-tRNA synthetase family. As to quaternary structure, homodimer.

The protein localises to the cytoplasm. The catalysed reaction is tRNA(His) + L-histidine + ATP = L-histidyl-tRNA(His) + AMP + diphosphate + H(+). This is Histidine--tRNA ligase from Campylobacter jejuni subsp. doylei (strain ATCC BAA-1458 / RM4099 / 269.97).